Consider the following 238-residue polypeptide: 6-phosphogluconolactonase (238 aa).

It belongs to the glucosamine/galactosamine-6-phosphate isomerase family. 6-phosphogluconolactonase subfamily.

The catalysed reaction is 6-phospho-D-glucono-1,5-lactone + H2O = 6-phospho-D-gluconate + H(+). It participates in carbohydrate degradation; pentose phosphate pathway; D-ribulose 5-phosphate from D-glucose 6-phosphate (oxidative stage): step 2/3. In terms of biological role, hydrolysis of 6-phosphogluconolactone to 6-phosphogluconate. This Mesorhizobium japonicum (strain LMG 29417 / CECT 9101 / MAFF 303099) (Mesorhizobium loti (strain MAFF 303099)) protein is 6-phosphogluconolactonase (pgl).